We begin with the raw amino-acid sequence, 416 residues long: Serine hydroxymethyltransferase (416 aa).

(6S)-5,6,7,8-tetrahydrofolate contacts are provided by residues Leu117 and 121–123 (GHL). At Lys226 the chain carries N6-(pyridoxal phosphate)lysine. (6S)-5,6,7,8-tetrahydrofolate is bound at residue Glu242.

Belongs to the SHMT family. In terms of assembly, homodimer. Pyridoxal 5'-phosphate serves as cofactor.

The protein resides in the cytoplasm. It carries out the reaction (6R)-5,10-methylene-5,6,7,8-tetrahydrofolate + glycine + H2O = (6S)-5,6,7,8-tetrahydrofolate + L-serine. It functions in the pathway one-carbon metabolism; tetrahydrofolate interconversion. Its pathway is amino-acid biosynthesis; glycine biosynthesis; glycine from L-serine: step 1/1. Its function is as follows. Catalyzes the reversible interconversion of serine and glycine with tetrahydrofolate (THF) serving as the one-carbon carrier. This reaction serves as the major source of one-carbon groups required for the biosynthesis of purines, thymidylate, methionine, and other important biomolecules. Also exhibits THF-independent aldolase activity toward beta-hydroxyamino acids, producing glycine and aldehydes, via a retro-aldol mechanism. The chain is Serine hydroxymethyltransferase from Endomicrobium trichonymphae.